The chain runs to 111 residues: Distal membrane-arm assembly complex protein 1 (111 aa).

The span at 1–11 (MGSSFSGSTEF) shows a compositional bias: polar residues. The segment at 1–40 (MGSSFSGSTEFSAPAPPTVSTAVPANPPAKSAVPASPARD) is disordered. Residues 18–38 (TVSTAVPANPPAKSAVPASPA) are compositionally biased toward low complexity. A run of 2 helical transmembrane segments spans residues 51–68 (VLSG…YLVA) and 81–101 (GTVL…VVLV).

Interacts with incompletely assembled mitochondrial NADH:ubiquinone oxidoreductase complex (complex I).

It is found in the mitochondrion inner membrane. In terms of biological role, required for the assembly of the mitochondrial NADH:ubiquinone oxidoreductase complex (complex I). Involved in the assembly of the distal region of complex I. This is Distal membrane-arm assembly complex protein 1 from Mus musculus (Mouse).